The following is a 551-amino-acid chain: RCC1 and BTB domain-containing protein 2 (551 aa).

RCC1 repeat units follow at residues 64–115, 117–169, 171–222, 223–274, 276–326, and 328–382; these read NDEI…VLAT, EGEV…VLTS, GEVF…AVVD, TGEV…VLTD, GQVY…AAKT, and GGHV…TVAE. One can recognise a BTB domain in the interval 394–457; sequence ADLKFLVDGK…LYTDSISLSP (64 aa).

The protein localises to the cytoplasmic vesicle. The protein resides in the secretory vesicle. It localises to the acrosome. The protein is RCC1 and BTB domain-containing protein 2 (RCBTB2) of Homo sapiens (Human).